The following is a 375-amino-acid chain: Succinyl-diaminopimelate desuccinylase (375 aa).

Position 66 (His66) interacts with Zn(2+). The active site involves Asp68. Zn(2+) is bound at residue Asp99. Residue Glu133 is the Proton acceptor of the active site. 3 residues coordinate Zn(2+): Glu134, Glu162, and His348.

This sequence belongs to the peptidase M20A family. DapE subfamily. Homodimer. It depends on Zn(2+) as a cofactor. Requires Co(2+) as cofactor.

It carries out the reaction N-succinyl-(2S,6S)-2,6-diaminopimelate + H2O = (2S,6S)-2,6-diaminopimelate + succinate. The protein operates within amino-acid biosynthesis; L-lysine biosynthesis via DAP pathway; LL-2,6-diaminopimelate from (S)-tetrahydrodipicolinate (succinylase route): step 3/3. Functionally, catalyzes the hydrolysis of N-succinyl-L,L-diaminopimelic acid (SDAP), forming succinate and LL-2,6-diaminopimelate (DAP), an intermediate involved in the bacterial biosynthesis of lysine and meso-diaminopimelic acid, an essential component of bacterial cell walls. This Escherichia coli O17:K52:H18 (strain UMN026 / ExPEC) protein is Succinyl-diaminopimelate desuccinylase.